Reading from the N-terminus, the 962-residue chain is CRACD-like protein (962 aa).

Disordered regions lie at residues 38-102 (GKKK…PESG), 131-174 (NVKM…HDVG), and 212-871 (PAES…QEPV). The segment covering 46–61 (PSSTGSSTWKQSQTRN) has biased composition (polar residues). Phosphoserine is present on serine 92. Residues 224-244 (AKHKLQVKPRNQRSSKMRRLS) show a composition bias toward basic residues. Residues 245–256 (SRAQSESLSDLT) are compositionally biased toward polar residues. A compositionally biased stretch (basic and acidic residues) spans 266–278 (EKPLLEVSPEERP). Pro residues-rich tracts occupy residues 292–303 (EPGPPAPLPPPG) and 354–365 (PPSPPEGPPNPG). The segment covering 407–425 (PEGDTTPPETDPAATSEAP) has biased composition (low complexity). 2 stretches are compositionally biased toward basic and acidic residues: residues 429 to 440 (DGPERSVPKEAE) and 459 to 480 (EPEREAETEPERGAGTEPERIG). Phosphoserine is present on serine 490. The segment covering 503-521 (AAASEGPAASPPLAAAESP) has biased composition (low complexity). Composition is skewed to basic and acidic residues over residues 536-546 (APERPKAERAE), 555-570 (AAPERKAERGGAELRG), 631-642 (KLAERGPQDSGD), and 709-728 (YSAEVRLERSLTVLPKEEKC). The segment covering 753-764 (PEPLSSKPPLPR) has biased composition (pro residues). 2 stretches are compositionally biased toward basic and acidic residues: residues 784 to 806 (PGEREPRKEPRTAEKRPLRRGAE) and 844 to 869 (QEDKPGARTLKSEPGKQAKVPERGQE).

The polypeptide is CRACD-like protein (Homo sapiens (Human)).